A 204-amino-acid polypeptide reads, in one-letter code: MVPRLDFAEAAKGVIAMARFAGARGWVPATSGNFSVRMNELSAALTATGANKAELDENGVIEAEIAGAKHPRASAEAPLHLARYRAAPGIGAISHMHSMAATVLSRRHAGTGAVRLEGWELMKAFAGVTTHDMSIDIPIVPNDQDTDRLAALVEERLDKDSICPGYLIAGHGLYVWGASAAETIRHMEAFDFLLTAQLHEESAR.

Zn(2+) contacts are provided by H95 and H97.

Belongs to the aldolase class II family. MtnB subfamily. Requires Zn(2+) as cofactor.

The catalysed reaction is 5-(methylsulfanyl)-D-ribulose 1-phosphate = 5-methylsulfanyl-2,3-dioxopentyl phosphate + H2O. It functions in the pathway amino-acid biosynthesis; L-methionine biosynthesis via salvage pathway; L-methionine from S-methyl-5-thio-alpha-D-ribose 1-phosphate: step 2/6. Functionally, catalyzes the dehydration of methylthioribulose-1-phosphate (MTRu-1-P) into 2,3-diketo-5-methylthiopentyl-1-phosphate (DK-MTP-1-P). The protein is Methylthioribulose-1-phosphate dehydratase of Parvibaculum lavamentivorans (strain DS-1 / DSM 13023 / NCIMB 13966).